Here is a 718-residue protein sequence, read N- to C-terminus: Phospholipid phosphatase-related protein type 3 (718 aa).

The next 3 membrane-spanning stretches (helical) occupy residues 18–38, 70–90, and 133–153; these read LPCF…SLYF, LIPL…SIMV, and FVGV…VIQL. Asparagine 169 carries an N-linked (GlcNAc...) asparagine glycan. 3 helical membrane-spanning segments follow: residues 207 to 227, 233 to 253, and 263 to 283; these read HATL…SVIS, LKPI…LTQI, and VYAG…HAVG. A disordered region spans residues 313 to 347; sequence SVYQQNKSVSTDELGPPGRLEGAPRPVAREKTSLG. A compositionally biased stretch (polar residues) spans 314–323; it reads VYQQNKSVST. N-linked (GlcNAc...) asparagine glycosylation is present at asparagine 318. A phosphoserine mark is found at serine 322 and serine 353. A Phosphothreonine modification is found at threonine 376. Positions 416–488 are disordered; sequence LEGRGLGLPD…GPRVILPPRA (73 aa). Position 428 is a phosphoserine (serine 428). Over residues 439–462 the composition is skewed to acidic residues; it reads MAEEEEEEEDEEEEEEEEEEEDEG. Residue serine 508 is modified to Phosphoserine. The span at 545 to 571 shows a compositional bias: low complexity; it reads APGAPGPKAAETASSSSASSDSSQYRS. The segment at 545 to 577 is disordered; the sequence is APGAPGPKAAETASSSSASSDSSQYRSPSDRDS. Serine 641 is modified (phosphoserine). Positions 664–680 are enriched in low complexity; sequence GEGLPPLGAADGALGPG. Positions 664–702 are disordered; sequence GEGLPPLGAADGALGPGSRESTLRRHAGGLGLAEREAEA.

Belongs to the PA-phosphatase related phosphoesterase family.

The protein localises to the membrane. This Homo sapiens (Human) protein is Phospholipid phosphatase-related protein type 3.